A 285-amino-acid polypeptide reads, in one-letter code: N-alpha-acetyltransferase 40 (285 aa).

In terms of domain architecture, N-acetyltransferase spans 88–274; it reads INYKLHKSRG…GGGRVVVPCD (187 aa). Substrate contacts are provided by residues Tyr116, 163–165, and Tyr185; that span reads TEE. Acetyl-CoA contacts are provided by residues 187 to 189 and 195 to 200; these read VHV and GHGIGR. Residue Thr228 participates in substrate binding. Asn233 contributes to the acetyl-CoA binding site.

It belongs to the acetyltransferase family. NAA40 subfamily.

The protein localises to the nucleus. It localises to the cytoplasm. It catalyses the reaction N-terminal L-seryl-[histone H4] + acetyl-CoA = N-terminal N(alpha)-acetyl-L-seryl-[histone H4] + CoA + H(+). It carries out the reaction N-terminal L-seryl-[histone H2A] + acetyl-CoA = N-terminal N(alpha)-acetyl-L-seryl-[histone H2A] + CoA + H(+). Functionally, N-alpha-acetyltransferase that specifically mediates the acetylation of the N-terminal residues of histones H4 and H2A. The polypeptide is N-alpha-acetyltransferase 40 (Saccharomyces cerevisiae (strain ATCC 204508 / S288c) (Baker's yeast)).